The sequence spans 522 residues: BTB/POZ domain-containing protein 3 (522 aa).

The segment at 25-44 is disordered; sequence RSKKSSKKANTSSSSSNSSK. A compositionally biased stretch (low complexity) spans 32–44; that stretch reads KANTSSSSSNSSK. The 71-residue stretch at 120 to 190 folds into the BTB domain; sequence ADVHFVVGPP…IYCDEIDLAA (71 aa). The region spanning 235 to 300 is the BACK domain; it reads FEEPDLTQRC…NWAEVECQRQ (66 aa).

It is found in the cytoplasm. The protein localises to the cytosol. The protein resides in the nucleus. Acts as a key regulator of dendritic field orientation during development of sensory cortex. Also directs dendrites toward active axon terminals when ectopically expressed. In Homo sapiens (Human), this protein is BTB/POZ domain-containing protein 3 (BTBD3).